Here is a 248-residue protein sequence, read N- to C-terminus: Small ribosomal subunit protein uS5 (248 aa).

The tract at residues 1 to 87 (MEDKKLSSAK…NPRFQRNNKD (87 aa)) is disordered. Positions 8 to 23 (SAKPATSSKPAPKAPS) are enriched in low complexity. The span at 57–87 (VAFEKRNFTSGDKTKKPTDSKNPRFQRNNKD) shows a compositional bias: basic and acidic residues. The S5 DRBM domain occupies 94–157 (YEEKIVDIAR…KDAHNNLVEV (64 aa)).

It belongs to the universal ribosomal protein uS5 family. Part of the 30S ribosomal subunit. Contacts proteins S4 and S8.

Functionally, with S4 and S12 plays an important role in translational accuracy. Located at the back of the 30S subunit body where it stabilizes the conformation of the head with respect to the body. The sequence is that of Small ribosomal subunit protein uS5 from Mycoplasmopsis synoviae (strain 53) (Mycoplasma synoviae).